The primary structure comprises 350 residues: C5a anaphylatoxin chemotactic receptor 1 (350 aa).

Residues 1–37 are Extracellular-facing; it reads MDSFDYTTPDYGHYDDKDTLDLNTPVDKTSNTLRVPD. Residues 10 to 18 form a required for CHIPS binding region; the sequence is DYGHYDDKD. Sulfotyrosine is present on residues Y11 and Y14. Positions 21-30 are involved in C5a binding; the sequence is DLNTPVDKTS. A helical transmembrane segment spans residues 38-64; the sequence is ILALVIFAVVFLVGVLGNALVVWVTAF. Topologically, residues 65-69 are cytoplasmic; the sequence is EAKRT. A helical membrane pass occupies residues 70–93; that stretch reads INAIWFLNLAVADFLSCLALPILF. Residues 94 to 110 are Extracellular-facing; the sequence is TSIVQHHHWPFGGAACS. C109 and C188 are disulfide-bonded. The helical transmembrane segment at 111-132 threads the bilayer; sequence ILPSLILLNMYASILLLATISA. Residues 133 to 153 are Cytoplasmic-facing; sequence DRFLLVFKPIWCQNFRGAGLA. A helical membrane pass occupies residues 154-174; the sequence is WIACAVAWGLALLLTIPSFLY. Topologically, residues 175 to 200 are extracellular; it reads RVVREEYFPPKVLCGVDYSHDKRRER. A helical transmembrane segment spans residues 201–226; the sequence is AVAIVRLVLGFLWPLLTLMICYTFIL. Topologically, residues 227-242 are cytoplasmic; that stretch reads LRTWSRRATRSTKTLK. The chain crosses the membrane as a helical span at residues 243-265; the sequence is VVVAVVASFFIFWLPYQVTGIMM. At 266–282 the chain is on the extracellular side; the sequence is SFLEPSSPTFRLLKKLD. The chain crosses the membrane as a helical span at residues 283–303; that stretch reads SLCVSFAYINCCINPIIYVVA. Residues 304–350 lie on the Cytoplasmic side of the membrane; that stretch reads GQGFQGRLQKSLPSLLRNVLTEESVVRESKSFARSTVDTMADKTQAV. S314, S317, S327, S332, S334, and S338 each carry phosphoserine.

The protein belongs to the G-protein coupled receptor 1 family. As to quaternary structure, homodimer. May also form higher-order oligomers. Interacts (when phosphorylated) with ARRB1 and ARRB2; the interaction is associated with internalization of C5aR. Interacts (via N-terminal domain) with S.aureus chemotaxis inhibitory protein (CHIPS); the interaction blocks the receptor and may thus inhibit the immune response. Sulfation plays a critical role in the association of C5aR with C5a, but no significant role in the ability of the receptor to transduce a signal and mobilize calcium in response to a small peptide agonist. Sulfation at Tyr-14 is important for CHIPS binding. Post-translationally, phosphorylated on serine residues in response to C5a binding, resulting in internalization of the receptor and short-term desensitization to C5a.

The protein localises to the cell membrane. It localises to the cytoplasmic vesicle. Its function is as follows. Receptor for the chemotactic and inflammatory peptide anaphylatoxin C5a. The ligand interacts with at least two sites on the receptor: a high-affinity site on the extracellular N-terminus, and a second site in the transmembrane region which activates downstream signaling events. Receptor activation stimulates chemotaxis, granule enzyme release, intracellular calcium release and superoxide anion production. The chain is C5a anaphylatoxin chemotactic receptor 1 (C5AR1) from Pan troglodytes (Chimpanzee).